Here is a 557-residue protein sequence, read N- to C-terminus: 2-succinyl-5-enolpyruvyl-6-hydroxy-3-cyclohexene-1-carboxylate synthase (557 aa).

This sequence belongs to the TPP enzyme family. MenD subfamily. As to quaternary structure, homodimer. Mg(2+) is required as a cofactor. Requires Mn(2+) as cofactor. The cofactor is thiamine diphosphate.

It carries out the reaction isochorismate + 2-oxoglutarate + H(+) = 5-enolpyruvoyl-6-hydroxy-2-succinyl-cyclohex-3-ene-1-carboxylate + CO2. Its pathway is quinol/quinone metabolism; 1,4-dihydroxy-2-naphthoate biosynthesis; 1,4-dihydroxy-2-naphthoate from chorismate: step 2/7. It participates in quinol/quinone metabolism; menaquinone biosynthesis. Catalyzes the thiamine diphosphate-dependent decarboxylation of 2-oxoglutarate and the subsequent addition of the resulting succinic semialdehyde-thiamine pyrophosphate anion to isochorismate to yield 2-succinyl-5-enolpyruvyl-6-hydroxy-3-cyclohexene-1-carboxylate (SEPHCHC). The protein is 2-succinyl-5-enolpyruvyl-6-hydroxy-3-cyclohexene-1-carboxylate synthase of Staphylococcus aureus (strain MSSA476).